The chain runs to 178 residues: FANCD2 opposite strand protein (178 aa).

The sequence is that of FANCD2 opposite strand protein (Fancd2os) from Mus musculus (Mouse).